Here is a 555-residue protein sequence, read N- to C-terminus: Glucose-6-phosphate isomerase (555 aa).

Residue Glu360 is the Proton donor of the active site. Residues His391 and Lys519 contribute to the active site.

This sequence belongs to the GPI family.

It is found in the cytoplasm. The catalysed reaction is alpha-D-glucose 6-phosphate = beta-D-fructose 6-phosphate. Its pathway is carbohydrate biosynthesis; gluconeogenesis. The protein operates within carbohydrate degradation; glycolysis; D-glyceraldehyde 3-phosphate and glycerone phosphate from D-glucose: step 2/4. Its function is as follows. Catalyzes the reversible isomerization of glucose-6-phosphate to fructose-6-phosphate. This chain is Glucose-6-phosphate isomerase, found in Acinetobacter baumannii (strain AB307-0294).